A 470-amino-acid polypeptide reads, in one-letter code: Isocitrate dehydrogenase (NAD(+)), mitochondrial (470 aa).

Residues 1–26 (MTRVERGRVLARAIERAVAHRASARR) constitute a mitochondrion transit peptide. Residues 138-140 (TVT) and asparagine 159 contribute to the NAD(+) site. D-threo-isocitrate-binding positions include 157–163 (SPNGAMR), arginine 193, tyrosine 200, lysine 275, and aspartate 319. Aspartate 319 lines the Mg(2+) pocket. Lysine 324 is an NAD(+) binding site. Position 343 (aspartate 343) interacts with D-threo-isocitrate. 2 residues coordinate Mg(2+): aspartate 343 and aspartate 347. NAD(+)-binding positions include 380–385 (HGTVAD) and asparagine 399.

Belongs to the isocitrate and isopropylmalate dehydrogenases family. In terms of assembly, forms homodimers. Mg(2+) serves as cofactor. The cofactor is Mn(2+).

The protein resides in the mitochondrion. It carries out the reaction D-threo-isocitrate + NAD(+) = 2-oxoglutarate + CO2 + NADH. With respect to regulation, the homodimer exhibits allosteric regulation by isocitrate. Functionally, performs an essential role in the oxidative function of the tricarboxylic acid cycle and respiration. Catalyzes the decarboxylation of isocitrate to produce 2-oxoglutarate and generate NADH to provide electrons for energy production. In Ostreococcus tauri, this protein is Isocitrate dehydrogenase (NAD(+)), mitochondrial.